We begin with the raw amino-acid sequence, 61 residues long: Photosystem II assembly protein Psb34 (61 aa).

Residues 36–56 (LIMAAITVVLVAGLIAVAVVA) form a helical membrane-spanning segment.

The protein belongs to the Psb34 family. As to quaternary structure, part of the photosystem II (PSII) assembly intermediate RC47 complex (with D1, D2, CP47, PsbE, PsbF, PsbH, Psb27 and Psb28); minor amounts are found in other PSII complexes, including mature, dimeric PSII with PsbO and PsbV. No HliA or HliB are detected in any of these complexes. Its interaction with PSII requires both CP47 (psbB) and PsbH. HliA/HliB and Psb34 probably bind to a similar site on CP47; their binding seems to be mutually exclusive.

The protein localises to the cellular thylakoid membrane. Involved in photosystem II (PSII) assembly and/or repair. Probably involved in conversion of late PSII assembly intermediates into mature dimeric PSII, it may mediate the optimal equlibrium of HliA/HliB among the intermediates containing CP47 (psbB) to facilitate photoprotection during assembly. The sequence is that of Photosystem II assembly protein Psb34 from Synechocystis sp. (strain ATCC 27184 / PCC 6803 / Kazusa).